A 71-amino-acid chain; its full sequence is Peptide Ctri9819 (71 aa).

The N-terminal stretch at 1-23 (MKTVSTVAILAIFLLIVITTIET) is a signal peptide. Leu-34 bears the Leucine amide mark. A propeptide spanning residues 38–71 (SKLETFKRIARTLSAGISAKRSLEDVNSLTGMSS) is cleaved from the precursor.

This sequence belongs to the non-disulfide-bridged peptide (NDBP) superfamily. Short antimicrobial peptide (group 4) family. Expressed by the venom gland.

Its subcellular location is the secreted. In terms of biological role, antimicrobial peptide. The protein is Peptide Ctri9819 of Chaerilus tricostatus (Scorpion).